We begin with the raw amino-acid sequence, 421 residues long: Phosphatidylinositol 5-phosphate 4-kinase type-2 gamma (421 aa).

Alanine 2 carries the post-translational modification N-acetylalanine. Residue serine 26 is modified to Phosphoserine. Positions 43-420 (AADPLVGVFL…RFLDFITNIF (378 aa)) constitute a PIPK domain. The segment at 69-75 (VMLLPDD) is required for interaction with PIP5K1A. Serine 349 is subject to Phosphoserine.

As to quaternary structure, interacts with PIP5K1A; the interaction inhibits PIP5K1A kinase activity. Post-translationally, phosphorylated, phosphorylation is induced by EGF.

The protein resides in the endoplasmic reticulum. The protein localises to the cytoplasm. It carries out the reaction a 1,2-diacyl-sn-glycero-3-phospho-(1D-myo-inositol-5-phosphate) + ATP = a 1,2-diacyl-sn-glycero-3-phospho-(1D-myo-inositol-4,5-bisphosphate) + ADP + H(+). It catalyses the reaction 1,2-dihexadecanoyl-sn-glycero-3-phospho-(1D-myo-inositol-5-phosphate) + ATP = 1,2-dihexadecanoyl-sn-glycero-3-phospho-(1D-myo-inositol-4,5-bisphosphate) + ADP + H(+). The catalysed reaction is 1,2-dihexadecanoyl-sn-glycero-3-phospho-(1D-myo-inositol-5-phosphate) + GTP = 1,2-dihexadecanoyl-sn-glycero-3-phospho-(1D-myo-inositol-4,5-bisphosphate) + GDP + H(+). Phosphatidylinositol 5-phosphate 4-kinase with low enzymatic activity. May be a GTP sensor, has higher GTP-dependent kinase activity than ATP-dependent kinase activity. PIP4Ks negatively regulate insulin signaling through a catalytic-independent mechanism. They interact with PIP5Ks and suppress PIP5K-mediated PtdIns(4,5)P2 synthesis and insulin-dependent conversion to PtdIns(3,4,5)P3. The chain is Phosphatidylinositol 5-phosphate 4-kinase type-2 gamma (PIP4K2C) from Pongo abelii (Sumatran orangutan).